Consider the following 437-residue polypeptide: Na(+)/H(+) antiporter NhaA (437 aa).

Helical transmembrane passes span 12–32, 65–85, 103–123, 133–153, 162–182, 186–206, 214–234, 308–328, 333–353, 377–397, and 412–432; these read SMNI…AVIA, LTMI…MVGL, ALPF…YSMV, GLAI…SLLG, IFLT…IAIF, HVAY…YFIG, IFFL…GIHS, GAVN…VMFS, VIGG…FLGI, ISGV…IANL, and LGVL…LHWV.

Belongs to the NhaA Na(+)/H(+) (TC 2.A.33) antiporter family.

It is found in the cell inner membrane. It carries out the reaction Na(+)(in) + 2 H(+)(out) = Na(+)(out) + 2 H(+)(in). Na(+)/H(+) antiporter that extrudes sodium in exchange for external protons. In Bacteroides fragilis (strain ATCC 25285 / DSM 2151 / CCUG 4856 / JCM 11019 / LMG 10263 / NCTC 9343 / Onslow / VPI 2553 / EN-2), this protein is Na(+)/H(+) antiporter NhaA.